The chain runs to 345 residues: N-acetyl-gamma-glutamyl-phosphate reductase (345 aa).

C149 is a catalytic residue.

Belongs to the NAGSA dehydrogenase family. Type 1 subfamily.

It localises to the cytoplasm. It catalyses the reaction N-acetyl-L-glutamate 5-semialdehyde + phosphate + NADP(+) = N-acetyl-L-glutamyl 5-phosphate + NADPH + H(+). It functions in the pathway amino-acid biosynthesis; L-arginine biosynthesis; N(2)-acetyl-L-ornithine from L-glutamate: step 3/4. In terms of biological role, catalyzes the NADPH-dependent reduction of N-acetyl-5-glutamyl phosphate to yield N-acetyl-L-glutamate 5-semialdehyde. The polypeptide is N-acetyl-gamma-glutamyl-phosphate reductase (Bacillus cereus (strain 03BB102)).